We begin with the raw amino-acid sequence, 327 residues long: MALLNVDKLSVHFGDESAPFRAVDRISYSVKQGEVVGIVGESGSGKSVSSLAIMGLIDYPGRVMAEKLEFNGQDLQRISEKERRNLVGAEVAMIFQDPMTSLNPCYTVGFQIMEAIKVHQGGNKSTRRQRAIDLLNQVGIPDPASRLDVYPHQLSGGMSQRVMIAMAIACRPKLLIADEPTTALDVTIQAQIIELLLELQQKENMALVLITHDLALVAEAAHKIIVMYAGQVVETGDAHAIFHAPRHPYTQALLRALPEFAQDKERLASLPGVVPGKYDRPNGCLLNPRCPYATDRCRAEEPALNMLADGRQSKCHYPLDDAGRPTL.

One can recognise an ABC transporter domain in the interval 4 to 254 (LNVDKLSVHF…PRHPYTQALL (251 aa)). Residue 40-47 (GESGSGKS) coordinates ATP.

The protein belongs to the ABC transporter superfamily. As to quaternary structure, the complex is composed of two ATP-binding proteins (DppD and DppF), two transmembrane proteins (DppB and DppC) and a solute-binding protein (DppA). MppA can replace DppA as binding protein for heme and ALA transport.

The protein resides in the cell inner membrane. The enzyme catalyses a dipeptide(out) + ATP + H2O = a dipeptide(in) + ADP + phosphate + H(+). In terms of biological role, part of the ABC transporter DppABCDF involved in dipeptide transport. Responsible for energy coupling to the transport system. When a foreign outer membrane heme receptor is expressed in E.coli, DppABCDF can also transport heme and its precursor, 5-aminolevulinic acid (ALA), from the periplasm into the cytoplasm. This is Dipeptide transport ATP-binding protein DppD (dppD) from Escherichia coli (strain K12).